An 875-amino-acid chain; its full sequence is Probable inorganic carbon transporter subunit DabA (875 aa).

Zn(2+) is bound by residues cysteine 399, aspartate 401, histidine 581, and cysteine 596.

Belongs to the inorganic carbon transporter (TC 9.A.2) DabA family. Forms a complex with DabB. Zn(2+) is required as a cofactor.

It is found in the cell membrane. Part of an energy-coupled inorganic carbon pump. This is Probable inorganic carbon transporter subunit DabA from Bacillus thuringiensis (strain Al Hakam).